Consider the following 175-residue polypeptide: Peptide methionine sulfoxide reductase MsrA (175 aa).

Cys10 is a catalytic residue.

It belongs to the MsrA Met sulfoxide reductase family.

The catalysed reaction is L-methionyl-[protein] + [thioredoxin]-disulfide + H2O = L-methionyl-(S)-S-oxide-[protein] + [thioredoxin]-dithiol. It carries out the reaction [thioredoxin]-disulfide + L-methionine + H2O = L-methionine (S)-S-oxide + [thioredoxin]-dithiol. Has an important function as a repair enzyme for proteins that have been inactivated by oxidation. Catalyzes the reversible oxidation-reduction of methionine sulfoxide in proteins to methionine. The polypeptide is Peptide methionine sulfoxide reductase MsrA (Clavibacter michiganensis subsp. michiganensis (strain NCPPB 382)).